Reading from the N-terminus, the 141-residue chain is Nucleoside diphosphate kinase (141 aa).

Lys11, Phe59, Arg87, Thr93, Arg104, and Asn114 together coordinate ATP. His117 serves as the catalytic Pros-phosphohistidine intermediate.

This sequence belongs to the NDK family. In terms of assembly, homotetramer. Mg(2+) serves as cofactor.

The protein resides in the cytoplasm. It catalyses the reaction a 2'-deoxyribonucleoside 5'-diphosphate + ATP = a 2'-deoxyribonucleoside 5'-triphosphate + ADP. The catalysed reaction is a ribonucleoside 5'-diphosphate + ATP = a ribonucleoside 5'-triphosphate + ADP. Functionally, major role in the synthesis of nucleoside triphosphates other than ATP. The ATP gamma phosphate is transferred to the NDP beta phosphate via a ping-pong mechanism, using a phosphorylated active-site intermediate. The sequence is that of Nucleoside diphosphate kinase from Xylella fastidiosa (strain 9a5c).